We begin with the raw amino-acid sequence, 196 residues long: MSREALIERQTTETNIRLKVALDGSGTWQGSSGIPFFDHLLAQMARHGLLDLKVWAEGDLEVDNHHTVEDIGICLGQAVKKALGDKKGISRYGSALVPMDEALVLVALDFSGRPYLAWGLELPPGRIGSLETELVEEFLRAMVNNSGLTLHVRQLAGHNAHHLAEALFKALGRAIRQAVTLDPREQGIPSTKGILS.

It belongs to the imidazoleglycerol-phosphate dehydratase family.

It is found in the cytoplasm. It catalyses the reaction D-erythro-1-(imidazol-4-yl)glycerol 3-phosphate = 3-(imidazol-4-yl)-2-oxopropyl phosphate + H2O. It functions in the pathway amino-acid biosynthesis; L-histidine biosynthesis; L-histidine from 5-phospho-alpha-D-ribose 1-diphosphate: step 6/9. This is Imidazoleglycerol-phosphate dehydratase from Moorella thermoacetica (strain ATCC 39073 / JCM 9320).